Reading from the N-terminus, the 320-residue chain is 4-hydroxythreonine-4-phosphate dehydrogenase (320 aa).

A substrate-binding site is contributed by T132. A divalent metal cation is bound by residues H161, H205, and H258. Residues K266, N275, and R284 each coordinate substrate.

The protein belongs to the PdxA family. Homodimer. The cofactor is a divalent metal cation.

The protein localises to the cytoplasm. The enzyme catalyses 4-(phosphooxy)-L-threonine + NAD(+) = 3-amino-2-oxopropyl phosphate + CO2 + NADH. Its pathway is cofactor biosynthesis; pyridoxine 5'-phosphate biosynthesis; pyridoxine 5'-phosphate from D-erythrose 4-phosphate: step 4/5. Its function is as follows. Catalyzes the NAD(P)-dependent oxidation of 4-(phosphooxy)-L-threonine (HTP) into 2-amino-3-oxo-4-(phosphooxy)butyric acid which spontaneously decarboxylates to form 3-amino-2-oxopropyl phosphate (AHAP). This is 4-hydroxythreonine-4-phosphate dehydrogenase from Aquifex aeolicus (strain VF5).